The primary structure comprises 126 residues: C-type natriuretic peptide (126 aa).

An N-terminal signal peptide occupies residues 1 to 23; it reads MHLSQLLACALLLALLSLRPSEA. Residues 20 to 71 form a disordered region; sequence PSEAKPGAPPKVPRTPSGEEVAEPQAAGGGQKKGDKTPGGGGANLKDDRSRL. The propeptide occupies 24–73; that stretch reads KPGAPPKVPRTPSGEEVAEPQAAGGGQKKGDKTPGGGGANLKDDRSRLLR. The span at 46–62 shows a compositional bias: gly residues; that stretch reads AGGGQKKGDKTPGGGGA. Cys110 and Cys126 are disulfide-bonded.

This sequence belongs to the natriuretic peptide family. Degraded by IDE (in vitro).

It is found in the secreted. Hormone which plays a role in endochondral ossification through regulation of cartilaginous growth plate chondrocytes proliferation and differentiation. May also be vasoactive and natriuretic. Acts by specifically binding and stimulating NPR2 to produce cGMP. Binds the clearance receptor NPR3. In Bos taurus (Bovine), this protein is C-type natriuretic peptide (NPPC).